The primary structure comprises 1040 residues: DIS3-like exonuclease 1 (1040 aa).

A CSD1 domain is found at 232–310; sequence AGIKSGRYKQ…KGRTGALCEN (79 aa). One can recognise a CSD2 domain in the interval 360-426; sequence VLVMPWDYRI…AEIATILVEN (67 aa). An RNB domain is found at 459-808; the sequence is RLDLRETHLV…VHRLLLAAVN (350 aa).

The protein belongs to the RNR ribonuclease family. As to quaternary structure, component of the RNA exosome complex. It depends on Mg(2+) as a cofactor.

The protein localises to the cytoplasm. The catalysed reaction is Exonucleolytic cleavage in the 3'- to 5'-direction to yield nucleoside 5'-phosphates.. Functionally, catalytic component of the RNA exosome complex which has 3'-&gt;5' exoribonuclease activity and participates in a multitude of cellular RNA processing and degradation events. The chain is DIS3-like exonuclease 1 (dis3l) from Xenopus laevis (African clawed frog).